The chain runs to 555 residues: Glutamine--tRNA ligase (555 aa).

The 'HIGH' region motif lies at Pro-34–His-44. Residues Glu-35–Asn-37 and His-41–Ser-47 contribute to the ATP site. Residues Asp-67 and Tyr-212 each coordinate L-glutamine. ATP contacts are provided by residues Thr-231, Arg-261–Leu-262, and Met-269–Lys-271. The 'KMSKS' region signature appears at Val-268 to Arg-272. Residues Thr-317–Glu-324 form an interaction with tRNA region.

It belongs to the class-I aminoacyl-tRNA synthetase family. As to quaternary structure, monomer.

The protein resides in the cytoplasm. The catalysed reaction is tRNA(Gln) + L-glutamine + ATP = L-glutaminyl-tRNA(Gln) + AMP + diphosphate. This chain is Glutamine--tRNA ligase, found in Salmonella agona (strain SL483).